A 480-amino-acid chain; its full sequence is Ribulose bisphosphate carboxylase large chain (480 aa).

The propeptide occupies 1-2 (MS). P3 carries the post-translational modification N-acetylproline. K14 is subject to N6,N6,N6-trimethyllysine. The substrate site is built by N123 and T173. K175 functions as the Proton acceptor in the catalytic mechanism. K177 serves as a coordination point for substrate. Mg(2+) contacts are provided by K201, D203, and E204. An N6-carboxylysine modification is found at K201. H294 serves as the catalytic Proton acceptor. Residues R295, H327, and S379 each contribute to the substrate site.

The protein belongs to the RuBisCO large chain family. Type I subfamily. In terms of assembly, heterohexadecamer of 8 large chains and 8 small chains; disulfide-linked. The disulfide link is formed within the large subunit homodimers. It depends on Mg(2+) as a cofactor. Post-translationally, the disulfide bond which can form in the large chain dimeric partners within the hexadecamer appears to be associated with oxidative stress and protein turnover.

The protein resides in the plastid. Its subcellular location is the chloroplast. The enzyme catalyses 2 (2R)-3-phosphoglycerate + 2 H(+) = D-ribulose 1,5-bisphosphate + CO2 + H2O. It catalyses the reaction D-ribulose 1,5-bisphosphate + O2 = 2-phosphoglycolate + (2R)-3-phosphoglycerate + 2 H(+). Functionally, ruBisCO catalyzes two reactions: the carboxylation of D-ribulose 1,5-bisphosphate, the primary event in carbon dioxide fixation, as well as the oxidative fragmentation of the pentose substrate in the photorespiration process. Both reactions occur simultaneously and in competition at the same active site. The polypeptide is Ribulose bisphosphate carboxylase large chain (Phalaenopsis aphrodite subsp. formosana (Moth orchid)).